The sequence spans 296 residues: Cell surface glycoprotein CD200 receptor 3 (296 aa).

An N-terminal signal peptide occupies residues 1–25 (MHALGRTLALMLLIFITILVPESSC). The Extracellular portion of the chain corresponds to 26 to 245 (SVKGREEIPP…NRGTTSILPS (220 aa)). In terms of domain architecture, Ig-like V-type spans 48–162 (PDGVGVTMEI…GIFQERHSIQ (115 aa)). Cysteines 75 and 146 form a disulfide. Positions 151 to 232 (TDGIFQERHS…SHLTDNWILS (82 aa)) constitute an Ig-like C2-type domain. Residues Asn167 and Asn199 are each glycosylated (N-linked (GlcNAc...) asparagine). A disulfide bond links Cys172 and Cys220. A helical membrane pass occupies residues 246–266 (LLSILYVKLAVTVLIVGFAFF). Topologically, residues 267 to 296 (QKRNYFSSRDLVFMKERRSKRSVWQREALG) are cytoplasmic.

The protein belongs to the CD200R family. As to quaternary structure, isoform 3 interacts with TYROBP. Isoform 8 does not interact with TYROBP. In terms of tissue distribution, expressed in uterus and bone marrow-derived mast cells (at protein level). Expressed in uterus, spleen, bone marrow-derived dendritic, basophil and mast cells. Expressed in the lung of N.brasiliensis-infected mice. Weakly expressed in brain, testis, lung and thymus.

The protein resides in the membrane. Its function is as follows. According to PubMed:15187158 isoform 4 is a receptor for the CD200 cell surface glycoprotein. According to PubMed:16081818 isoform 4 is not a receptor for the CD200/OX2 cell surface glycoprotein. Isoform 1, isoform 2 and isoform 3 are involved in the recruitment or surface expression of the TYROBP receptor. Isoform 6, isoform 7 and isoform 8 are not involved in the recruitment or surface expression of the TYROBP receptor. The protein is Cell surface glycoprotein CD200 receptor 3 (Cd200r3) of Mus musculus (Mouse).